Reading from the N-terminus, the 311-residue chain is Mediator of RNA polymerase II transcription subunit 27 (311 aa).

A Phosphoserine modification is found at Ser-132. Residue Lys-134 is modified to N6-methyllysine.

It belongs to the Mediator complex subunit 27 family. As to quaternary structure, component of the Mediator complex, which is composed of MED1, MED4, MED6, MED7, MED8, MED9, MED10, MED11, MED12, MED13, MED13L, MED14, MED15, MED16, MED17, MED18, MED19, MED20, MED21, MED22, MED23, MED24, MED25, MED26, MED27, MED29, MED30, MED31, CCNC, CDK8 and CDC2L6/CDK11. The MED12, MED13, CCNC and CDK8 subunits form a distinct module termed the CDK8 module. Mediator containing the CDK8 module is less active than Mediator lacking this module in supporting transcriptional activation. Individual preparations of the Mediator complex lacking one or more distinct subunits have been variously termed ARC, CRSP, DRIP, PC2, SMCC and TRAP.

The protein resides in the nucleus. Component of the Mediator complex, a coactivator involved in the regulated transcription of nearly all RNA polymerase II-dependent genes. Mediator functions as a bridge to convey information from gene-specific regulatory proteins to the basal RNA polymerase II transcription machinery. Mediator is recruited to promoters by direct interactions with regulatory proteins and serves as a scaffold for the assembly of a functional preinitiation complex with RNA polymerase II and the general transcription factors. The chain is Mediator of RNA polymerase II transcription subunit 27 (MED27) from Sus scrofa (Pig).